The sequence spans 546 residues: MAKEIKFSDSARNLLFEGVRQLHDAVKVTMGPRGRNVLIQKSYGAPSITKDGVSVAKEIELSCPVANMGAQLVKEVASKTADAAGDGTTTATVLAYSIFKEGLRNITAGANPIEVKRGMDKAAEAIINELKKASKKVGGKEEITQVATISANSDHNIGKLIADAMEKVGKDGVITVEEAKGIEDELDVVEGMQFDRGYLSPYFVTNAEKMTAQLDNAYILLTDKKISSMKDILPLLEKTMKEGKPLLIIAEDIEGEALTTLVVNKLRGVLNIAAVKAPGFGDRRKEMLKDIAILTGGQVISEELGLSLENAEVEFLGKAGRIVIDKDNTTIVDGKGHSDDVKDRVAQIKTQIASTTSDYDKEKLQERLAKLSGGVAVIKVGAASEVEMKEKKDRVDDALSATKAAVEEGIVIGGGAALIRAAQKVHLNLHDDEKVGYEIIMRAIKAPLAQIAINAGYDGGVVVNEVEKHEGHFGFNASNGKYVDMFKEGIIDPLKVERIALQNAVSVSSLLLTTEATVHEIKEEKAAPAMPDMGGMGGMGGMGGMM.

ATP-binding positions include Thr29–Pro32, Lys50, Asp86–Thr90, Gly414, and Asp492.

Belongs to the chaperonin (HSP60) family. In terms of assembly, forms a cylinder of 14 subunits composed of two heptameric rings stacked back-to-back. Interacts with the co-chaperonin GroES.

The protein localises to the cytoplasm. It catalyses the reaction ATP + H2O + a folded polypeptide = ADP + phosphate + an unfolded polypeptide.. Its function is as follows. Together with its co-chaperonin GroES, plays an essential role in assisting protein folding. The GroEL-GroES system forms a nano-cage that allows encapsulation of the non-native substrate proteins and provides a physical environment optimized to promote and accelerate protein folding. This chain is Chaperonin GroEL, found in Helicobacter pylori (strain HPAG1).